Here is a 234-residue protein sequence, read N- to C-terminus: Ubiquitin carboxyl-terminal hydrolase 3 (234 aa).

A UCH catalytic domain is found at 12 to 232 (RWLPLESNPD…LNFNLIAISK (221 aa)). Residue cysteine 101 is the Nucleophile of the active site. Histidine 172 acts as the Proton donor in catalysis.

The protein belongs to the peptidase C12 family.

It catalyses the reaction Thiol-dependent hydrolysis of ester, thioester, amide, peptide and isopeptide bonds formed by the C-terminal Gly of ubiquitin (a 76-residue protein attached to proteins as an intracellular targeting signal).. This chain is Ubiquitin carboxyl-terminal hydrolase 3, found in Arabidopsis thaliana (Mouse-ear cress).